The following is a 361-amino-acid chain: D-alanine--D-alanine ligase (361 aa).

Residues 144–350 form the ATP-grasp domain; the sequence is KLCVSEAGIA…FPELCDRLLQ (207 aa). ATP is bound at residue 177 to 232; the sequence is PETLIYPVFVKPAHLGSSVGISKVSVQGELPEALAHACNLDTKVLIEQAMHGKEIE. Mg(2+) contacts are provided by aspartate 303, glutamate 317, and asparagine 319.

Belongs to the D-alanine--D-alanine ligase family. It depends on Mg(2+) as a cofactor. Mn(2+) serves as cofactor.

It localises to the cytoplasm. It carries out the reaction 2 D-alanine + ATP = D-alanyl-D-alanine + ADP + phosphate + H(+). The protein operates within cell wall biogenesis; peptidoglycan biosynthesis. Its function is as follows. Cell wall formation. This Chlorobium phaeovibrioides (strain DSM 265 / 1930) (Prosthecochloris vibrioformis (strain DSM 265)) protein is D-alanine--D-alanine ligase.